Here is a 165-residue protein sequence, read N- to C-terminus: Large ribosomal subunit protein uL10 (165 aa).

Belongs to the universal ribosomal protein uL10 family. In terms of assembly, part of the ribosomal stalk of the 50S ribosomal subunit. The N-terminus interacts with L11 and the large rRNA to form the base of the stalk. The C-terminus forms an elongated spine to which L12 dimers bind in a sequential fashion forming a multimeric L10(L12)X complex.

Its function is as follows. Forms part of the ribosomal stalk, playing a central role in the interaction of the ribosome with GTP-bound translation factors. The sequence is that of Large ribosomal subunit protein uL10 from Burkholderia mallei (strain NCTC 10229).